A 3096-amino-acid chain; its full sequence is Cilia- and flagella-associated protein 54 (3096 aa).

The segment covering 1–45 has biased composition (low complexity); sequence MAAQGSPSSSPSDDSTTSGSLPELPPTSTATSRSPPESKGSSRSS. 2 disordered regions span residues 1–46 and 1248–1267; these read MAAQ…RSSL and SNEQEEMPEEDSSKKSLKTK.

The protein belongs to the CFAP54 family.

Its subcellular location is the cytoplasm. It localises to the cytoskeleton. It is found in the cilium axoneme. In terms of biological role, required for assembly and function of cilia and flagella. This Homo sapiens (Human) protein is Cilia- and flagella-associated protein 54.